The chain runs to 165 residues: Cyclic pyranopterin monophosphate synthase (165 aa).

Substrate is bound by residues 83 to 85 (FCH) and 120 to 121 (ME). Residue D135 is part of the active site.

This sequence belongs to the MoaC family. In terms of assembly, homohexamer; trimer of dimers.

It catalyses the reaction (8S)-3',8-cyclo-7,8-dihydroguanosine 5'-triphosphate = cyclic pyranopterin phosphate + diphosphate. The protein operates within cofactor biosynthesis; molybdopterin biosynthesis. In terms of biological role, catalyzes the conversion of (8S)-3',8-cyclo-7,8-dihydroguanosine 5'-triphosphate to cyclic pyranopterin monophosphate (cPMP). The polypeptide is Cyclic pyranopterin monophosphate synthase (Xanthomonas campestris pv. campestris (strain B100)).